A 175-amino-acid polypeptide reads, in one-letter code: UPF0398 protein SGO_0588 (175 aa).

Belongs to the UPF0398 family.

The chain is UPF0398 protein SGO_0588 from Streptococcus gordonii (strain Challis / ATCC 35105 / BCRC 15272 / CH1 / DL1 / V288).